Reading from the N-terminus, the 435-residue chain is MKTQIEQAREGIITPQMAAVAAEEHVSPEYVCRMVAEGKVVIPWNHVRAPKAVGIGKGLRTKVNASIGTSSDIVDYEAEVRKARAAQESGADTLMELSVGGDLDRVRREVIAAVDLPVGNVPLYQAFCEAARKYGDPNRLDPEMLFDLIERQCADGMAFMAVHCGINLYTIERLRRQGYRYGGLVSKGGVSMVGWMMANGRENPLYEQFDRVVGILKKYDTVLSLGNGLRAGAIHDSSDRAQIQELLINCELAEMGREMGCQMLVEGPGHVPLDEVEGNIQLQKRMSGGAPYYMLGPISTDVAPGFDHITAAIGAAQSSRFGADLICYITPAEHLALPNEEDVRQGVKAARVAAYIGDMNKYPEKGRERDREMSKARRDLDWQRQFELALYPEDARAIRASRTPEDEATCTMCGDFCASRGAGRLFAGDLRGDKV.

Residues methionine 95, tyrosine 124, histidine 163, serine 186–glycine 188, asparagine 227–arginine 230, and glutamate 266 contribute to the substrate site. Histidine 270 serves as a coordination point for Zn(2+). A substrate-binding site is contributed by tyrosine 293. Histidine 334 serves as a coordination point for Zn(2+). [4Fe-4S] cluster-binding residues include cysteine 410, cysteine 413, and cysteine 417.

Belongs to the ThiC family. 5-hydroxybenzimidazole synthase subfamily. In terms of assembly, homodimer. [4Fe-4S] cluster serves as cofactor.

The catalysed reaction is 5-amino-1-(5-phospho-beta-D-ribosyl)imidazole + AH2 + S-adenosyl-L-methionine = 5-hydroxybenzimidazole + 5'-deoxyadenosine + formate + L-methionine + A + NH4(+) + phosphate + 2 H(+). Its function is as follows. Catalyzes the conversion of aminoimidazole ribotide (AIR) to 5-hydroxybenzimidazole (5-HBI) in a radical S-adenosyl-L-methionine (SAM)-dependent reaction. Is thus involved in the anaerobic biosynthesis of the benzimidazole lower axial ligand of the cobamide produced by G.sulfurreducens. This Geobacter sulfurreducens (strain ATCC 51573 / DSM 12127 / PCA) protein is 5-hydroxybenzimidazole synthase.